Reading from the N-terminus, the 98-residue chain is Integration host factor subunit alpha (98 aa).

The segment at 51–71 (NFDLRDKNERPGRNPKTGEDI) is disordered. Residues 53–69 (DLRDKNERPGRNPKTGE) show a composition bias toward basic and acidic residues.

Belongs to the bacterial histone-like protein family. Heterodimer of an alpha and a beta chain.

This protein is one of the two subunits of integration host factor, a specific DNA-binding protein that functions in genetic recombination as well as in transcriptional and translational control. This Vibrio cholerae serotype O1 (strain ATCC 39541 / Classical Ogawa 395 / O395) protein is Integration host factor subunit alpha.